Consider the following 472-residue polypeptide: Tryptophanase (472 aa).

Residue Lys-270 is modified to N6-(pyridoxal phosphate)lysine.

It belongs to the beta-eliminating lyase family. In terms of assembly, homotetramer. Pyridoxal 5'-phosphate is required as a cofactor.

The enzyme catalyses L-tryptophan + H2O = indole + pyruvate + NH4(+). It participates in amino-acid degradation; L-tryptophan degradation via pyruvate pathway; indole and pyruvate from L-tryptophan: step 1/1. In Vibrio cholerae serotype O1 (strain ATCC 39315 / El Tor Inaba N16961), this protein is Tryptophanase (tnaA).